Reading from the N-terminus, the 348-residue chain is Phosphoribosylformylglycinamidine cyclo-ligase (348 aa).

It belongs to the AIR synthase family.

Its subcellular location is the cytoplasm. The catalysed reaction is 2-formamido-N(1)-(5-O-phospho-beta-D-ribosyl)acetamidine + ATP = 5-amino-1-(5-phospho-beta-D-ribosyl)imidazole + ADP + phosphate + H(+). Its pathway is purine metabolism; IMP biosynthesis via de novo pathway; 5-amino-1-(5-phospho-D-ribosyl)imidazole from N(2)-formyl-N(1)-(5-phospho-D-ribosyl)glycinamide: step 2/2. The sequence is that of Phosphoribosylformylglycinamidine cyclo-ligase from Cereibacter sphaeroides (strain ATCC 17025 / ATH 2.4.3) (Rhodobacter sphaeroides).